The primary structure comprises 458 residues: Jacalin-related lectin 22 (458 aa).

3 consecutive Jacalin-type lectin domains span residues 5 to 153, 160 to 301, and 311 to 453; these read YRKL…YFVL, LYKL…YFGP, and SKKL…TIVP.

Belongs to the jacalin lectin family. In terms of assembly, component of the PYK10 complex, at least composed of PYK10/BGLU23, BGLU21, BGLU22, JAL22, JAL23, PBP1/JAL30, PBP2/JAL31, JAL32, JAL33, JAL34, JAL35, GLL22 and GLL23.

In terms of biological role, inhibitor-type lectin that may regulate the correct polymerization and activation of BGLU23/PYK10 upon tissue damage. The chain is Jacalin-related lectin 22 (JAL22) from Arabidopsis thaliana (Mouse-ear cress).